Consider the following 651-residue polypeptide: Cytoplasmic tyrosine-protein kinase BMX (651 aa).

The 108-residue stretch at 4 to 111 (KSILEELLLK…WLKALQKEIR (108 aa)) folds into the PH domain. The Btk-type zinc-finger motif lies at 113 to 149 (NPHLLIKYHSGFFVDGKFLCCQQSCKAAPGCTLWEAY). Zn(2+) is bound by residues His-121, Cys-132, Cys-133, and Cys-143. Residues 272–368 (WFAGNISRSQ…GMITRLRHPV (97 aa)) enclose the SH2 domain. A Protein kinase domain is found at 393–646 (ITLLKELGNG…QLLSAIEPLR (254 aa)). ATP contacts are provided by residues 399–407 (LGNGQFGVV) and Lys-421. The active-site Proton acceptor is Asp-512. The residue at position 542 (Tyr-542) is a Phosphotyrosine; by SRC and autocatalysis.

This sequence belongs to the protein kinase superfamily. Tyr protein kinase family. TEC subfamily. Interacts with BCAR1, CAV1, MYD88, PTK2/FAK1, RUFY1, RUFY2, STAT3, TIRAP and TNFRSF1B. It depends on Zn(2+) as a cofactor. Post-translationally, phosphorylated in response to protein I/II and to LPS. Phosphorylation at Tyr-542 by SRC and by autocatalysis leads to activation and is required for STAT3 phosphorylation by BMX. Specifically expressed in the endocardium of the developing heart as well as in the endocardium of the left ventricle and in the endothelium of large arteries in adult mice.

The protein localises to the cytoplasm. It carries out the reaction L-tyrosyl-[protein] + ATP = O-phospho-L-tyrosyl-[protein] + ADP + H(+). TEK and vascular endothelial growth factor receptor 1 (FLT1) stimulate BMX tyrosine kinase activity. Activated by integrins through the mediation of PTK2/FAK1. Activated by TNF through the mediation of TNFRSF1B. Its function is as follows. Non-receptor tyrosine kinase that plays central but diverse modulatory roles in various signaling processes involved in the regulation of actin reorganization, cell migration, cell proliferation and survival, cell adhesion, and apoptosis. Participates in signal transduction stimulated by growth factor receptors, cytokine receptors, G-protein coupled receptors, antigen receptors and integrins. Induces tyrosine phosphorylation of BCAR1 in response to integrin regulation. Activation of BMX by integrins is mediated by PTK2/FAK1, a key mediator of integrin signaling events leading to the regulation of actin cytoskeleton and cell motility. Plays a critical role in TNF-induced angiogenesis, and implicated in the signaling of TEK and FLT1 receptors, 2 important receptor families essential for angiogenesis. Required for the phosphorylation and activation of STAT3, a transcription factor involved in cell differentiation. Also involved in interleukin-6 (IL6) induced differentiation. Also plays a role in programming adaptive cytoprotection against extracellular stress in different cell systems, salivary epithelial cells, brain endothelial cells, and dermal fibroblasts. May be involved in regulation of endocytosis through its interaction with an endosomal protein RUFY1. May also play a role in the growth and differentiation of hematopoietic cells; as well as in signal transduction in endocardial and arterial endothelial cells. This chain is Cytoplasmic tyrosine-protein kinase BMX (Bmx), found in Mus musculus (Mouse).